Reading from the N-terminus, the 100-residue chain is MSKSNKKSKPKYTLENLQQIPGVLAFMICKGNTIAHSTFLEAENPRQIAYNAMRMATRTQGTELRDLKVHTIQVQYDDFQIEMFQIGGHFCILKKRVDTD.

This is an uncharacterized protein from Caenorhabditis elegans.